The following is a 1100-amino-acid chain: DNA-directed RNA polymerase subunit beta (1100 aa).

The interval 1064–1100 (YEEDKEVDLMADVNQRRTPSRPTYESMSVGDIDDDDD) is disordered. The segment covering 1079–1089 (RRTPSRPTYES) has biased composition (polar residues).

Belongs to the RNA polymerase beta chain family. In terms of assembly, in cyanobacteria the RNAP catalytic core is composed of 2 alpha, 1 beta, 1 beta', 1 gamma and 1 omega subunit. When a sigma factor is associated with the core the holoenzyme is formed, which can initiate transcription.

The enzyme catalyses RNA(n) + a ribonucleoside 5'-triphosphate = RNA(n+1) + diphosphate. DNA-dependent RNA polymerase catalyzes the transcription of DNA into RNA using the four ribonucleoside triphosphates as substrates. The chain is DNA-directed RNA polymerase subunit beta from Synechococcus sp. (strain ATCC 27144 / PCC 6301 / SAUG 1402/1) (Anacystis nidulans).